Consider the following 534-residue polypeptide: Flavonoid-6-hydroxylase (534 aa).

The chain crosses the membrane as a helical span at residues 3–23 (FISFVYTLIAFSSLLYFYLIW). A heme-binding site is contributed by C467.

The protein belongs to the cytochrome P450 family. Heme is required as a cofactor. Expressed in leaves.

The protein localises to the membrane. It carries out the reaction genkwanin + reduced [NADPH--hemoprotein reductase] + O2 = scutellarein 7-methyl ether + oxidized [NADPH--hemoprotein reductase] + H2O. The enzyme catalyses (2S)-sakuranetin + reduced [NADPH--hemoprotein reductase] + O2 = (2S)-7-methylcarthamidin + oxidized [NADPH--hemoprotein reductase] + H2O + H(+). It catalyses the reaction apigenin 4',7-dimethyl ether + reduced [NADPH--hemoprotein reductase] + O2 = ladanein + oxidized [NADPH--hemoprotein reductase] + H2O + H(+). The catalysed reaction is (2S)-naringenin 4',7-dimethyl ether + reduced [NADPH--hemoprotein reductase] + O2 = (2S)-carthamidin-4',7-dimethyl ether + oxidized [NADPH--hemoprotein reductase] + H2O + H(+). The protein operates within flavonoid metabolism. In terms of biological role, hydroxylase involved in the biosynthesis of polymethoxylated flavonoids natural products such as nevadensin and salvigenin, aroma compounds which contribute to the flavor of sweet basil, and exhibit pharmacological activities such as anti-allergic, anti-oxidant, antibacterial, anti-proliferative, and anti-inflammatory effects. Catalyzes the 6-hydroxylation of 7-O-methylated precursors such as the conversion of genkwanin (GENK) to scutellarein-7-methyl ether (SCU7Me). Can also use, with a lower efficiency, apigenin-7,4'-dimethyl ether (AdM), naringenin-7-methyl ether (SAK) and naringenin-7,4'-dimethyl ether (NdM) as substrates. The polypeptide is Flavonoid-6-hydroxylase (Ocimum basilicum (Sweet basil)).